A 381-amino-acid chain; its full sequence is Cytochrome b (381 aa).

4 consecutive transmembrane segments (helical) span residues 33–53, 77–98, 113–133, and 178–198; these read FGSL…FLAM, WLLR…FLHV, WNIG…GYVL, and FFAF…VHLL. His-83 and His-97 together coordinate heme b. Residues His-182 and His-196 each coordinate heme b. Position 201 (His-201) interacts with a ubiquinone. 4 helical membrane-spanning segments follow: residues 226-246, 288-308, 320-340, and 347-367; these read IKDA…ALFS, LGGV…PLLH, VSQT…WIGG, and FIII…VMMP.

The protein belongs to the cytochrome b family. In terms of assembly, the cytochrome bc1 complex contains 11 subunits: 3 respiratory subunits (MT-CYB, CYC1 and UQCRFS1), 2 core proteins (UQCRC1 and UQCRC2) and 6 low-molecular weight proteins (UQCRH/QCR6, UQCRB/QCR7, UQCRQ/QCR8, UQCR10/QCR9, UQCR11/QCR10 and a cleavage product of UQCRFS1). This cytochrome bc1 complex then forms a dimer. It depends on heme b as a cofactor.

The protein resides in the mitochondrion inner membrane. Functionally, component of the ubiquinol-cytochrome c reductase complex (complex III or cytochrome b-c1 complex) that is part of the mitochondrial respiratory chain. The b-c1 complex mediates electron transfer from ubiquinol to cytochrome c. Contributes to the generation of a proton gradient across the mitochondrial membrane that is then used for ATP synthesis. The chain is Cytochrome b (MT-CYB) from Dasyurus hallucatus (Northern quoll).